The primary structure comprises 626 residues: Chaperone protein HtpG (626 aa).

Residues 1-341 (METKQFKAES…SEDLSLNISR (341 aa)) are a; substrate-binding. The tract at residues 342-552 (EMLQHDRQLK…EGEISIEMEK (211 aa)) is b. A c region spans residues 553 to 626 (ILSAMPNNEN…FSNSICKLMI (74 aa)).

It belongs to the heat shock protein 90 family. Homodimer.

The protein resides in the cytoplasm. In terms of biological role, molecular chaperone. Has ATPase activity. This chain is Chaperone protein HtpG, found in Alkaliphilus oremlandii (strain OhILAs) (Clostridium oremlandii (strain OhILAs)).